Consider the following 209-residue polypeptide: ATP-dependent Clp protease proteolytic subunit (209 aa).

Serine 106 serves as the catalytic Nucleophile. Residue histidine 131 is part of the active site.

This sequence belongs to the peptidase S14 family. In terms of assembly, fourteen ClpP subunits assemble into 2 heptameric rings which stack back to back to give a disk-like structure with a central cavity, resembling the structure of eukaryotic proteasomes.

It localises to the cytoplasm. The enzyme catalyses Hydrolysis of proteins to small peptides in the presence of ATP and magnesium. alpha-casein is the usual test substrate. In the absence of ATP, only oligopeptides shorter than five residues are hydrolyzed (such as succinyl-Leu-Tyr-|-NHMec, and Leu-Tyr-Leu-|-Tyr-Trp, in which cleavage of the -Tyr-|-Leu- and -Tyr-|-Trp bonds also occurs).. Its function is as follows. Cleaves peptides in various proteins in a process that requires ATP hydrolysis. Has a chymotrypsin-like activity. Plays a major role in the degradation of misfolded proteins. This is ATP-dependent Clp protease proteolytic subunit from Brucella suis biovar 1 (strain 1330).